The following is a 356-amino-acid chain: Icosanoyl-CoA 5-desaturase (356 aa).

A helical transmembrane segment spans residues 5-25; it reads LYFPISISLSLSLEAMASFIA. Positions 38-58 are disordered; sequence LDPKIPTKPEPKTETPKPKDD. The span at 42-58 shows a compositional bias: basic and acidic residues; that stretch reads IPTKPEPKTETPKPKDD. 2 consecutive transmembrane segments (helical) span residues 88-108 and 111-131; these read NAVTLLVLHALAAMAPFYFSW and FWISFILLGFASGVLGITLCF. A Histidine box-1 motif is present at residues 132 to 137; sequence HRCLTH. The Histidine box-2 signature appears at 169–173; it reads HRYHH. Residues 236-256 traverse the membrane as a helical segment; it reads ALIALLYYVGGFPYIVWGMGF. A Histidine box-3 motif is present at residues 302-306; that stretch reads HNNHH.

The protein belongs to the fatty acid desaturase type 1 family. Fe(2+) serves as cofactor.

It is found in the membrane. The catalysed reaction is eicosanoyl-CoA + 2 Fe(II)-[cytochrome b5] + O2 + 2 H(+) = (5Z)-eicosenoyl-CoA + 2 Fe(III)-[cytochrome b5] + 2 H2O. Its pathway is lipid metabolism; monounsaturated fatty acid biosynthesis. Its function is as follows. Desaturase involved in the biosynthesis of (5Z)-icos-5-enoate, an unusual monounsaturated fatty acid that makes up to 60% of the total fatty acids in Limnanthes sp. seed oil. Only acts on saturated fatty acids. The chain is Icosanoyl-CoA 5-desaturase from Limnanthes douglasii (Douglas' meadowfoam).